We begin with the raw amino-acid sequence, 356 residues long: Histidinol-phosphate aminotransferase (356 aa).

Lys214 carries the N6-(pyridoxal phosphate)lysine modification.

This sequence belongs to the class-II pyridoxal-phosphate-dependent aminotransferase family. Histidinol-phosphate aminotransferase subfamily. Homodimer. It depends on pyridoxal 5'-phosphate as a cofactor.

The enzyme catalyses L-histidinol phosphate + 2-oxoglutarate = 3-(imidazol-4-yl)-2-oxopropyl phosphate + L-glutamate. It participates in amino-acid biosynthesis; L-histidine biosynthesis; L-histidine from 5-phospho-alpha-D-ribose 1-diphosphate: step 7/9. In Escherichia coli O127:H6 (strain E2348/69 / EPEC), this protein is Histidinol-phosphate aminotransferase.